The following is a 92-amino-acid chain: RNA-binding protein Hfq (92 aa).

Positions 9-68 (DPFLNALRRERVPVSVYLVNGIKLQGTIESFDQFVVLLRNTVSQMVYKHAISTVVPARNV) constitute a Sm domain.

It belongs to the Hfq family. In terms of assembly, homohexamer.

Its function is as follows. RNA chaperone that binds small regulatory RNA (sRNAs) and mRNAs to facilitate mRNA translational regulation in response to envelope stress, environmental stress and changes in metabolite concentrations. Also binds with high specificity to tRNAs. The protein is RNA-binding protein Hfq of Xylella fastidiosa (strain M12).